The primary structure comprises 373 residues: L-threonine 3-dehydrogenase, mitochondrial (373 aa).

Residues 62-67, 88-90, 106-107, Tyr-195, Lys-199, and Ile-225 contribute to the NAD(+) site; these read GGLGQL, DIR, and DI. Tyr-195 functions as the Proton donor/acceptor in the catalytic mechanism.

It belongs to the NAD(P)-dependent epimerase/dehydratase family. As to quaternary structure, homodimer.

Its subcellular location is the mitochondrion. The enzyme catalyses L-threonine + NAD(+) = (2S)-2-amino-3-oxobutanoate + NADH + H(+). It participates in amino-acid degradation; L-threonine degradation via oxydo-reductase pathway; glycine from L-threonine: step 1/2. Catalyzes the NAD(+)-dependent oxidation of L-threonine to 2-amino-3-ketobutyrate, mediating L-threonine catabolism. This chain is L-threonine 3-dehydrogenase, mitochondrial, found in Bos taurus (Bovine).